Consider the following 417-residue polypeptide: Serine hydroxymethyltransferase (417 aa).

(6S)-5,6,7,8-tetrahydrofolate contacts are provided by residues Leu122 and 126-128 (GHL). At Lys230 the chain carries N6-(pyridoxal phosphate)lysine. 355-357 (SPF) provides a ligand contact to (6S)-5,6,7,8-tetrahydrofolate.

It belongs to the SHMT family. Homodimer. Pyridoxal 5'-phosphate serves as cofactor.

It is found in the cytoplasm. The catalysed reaction is (6R)-5,10-methylene-5,6,7,8-tetrahydrofolate + glycine + H2O = (6S)-5,6,7,8-tetrahydrofolate + L-serine. Its pathway is one-carbon metabolism; tetrahydrofolate interconversion. The protein operates within amino-acid biosynthesis; glycine biosynthesis; glycine from L-serine: step 1/1. Functionally, catalyzes the reversible interconversion of serine and glycine with tetrahydrofolate (THF) serving as the one-carbon carrier. This reaction serves as the major source of one-carbon groups required for the biosynthesis of purines, thymidylate, methionine, and other important biomolecules. Also exhibits THF-independent aldolase activity toward beta-hydroxyamino acids, producing glycine and aldehydes, via a retro-aldol mechanism. The polypeptide is Serine hydroxymethyltransferase (Francisella philomiragia subsp. philomiragia (strain ATCC 25017 / CCUG 19701 / FSC 153 / O#319-036)).